The sequence spans 254 residues: Aspartate/glutamate leucyltransferase (254 aa).

It belongs to the R-transferase family. Bpt subfamily.

Its subcellular location is the cytoplasm. The catalysed reaction is N-terminal L-glutamyl-[protein] + L-leucyl-tRNA(Leu) = N-terminal L-leucyl-L-glutamyl-[protein] + tRNA(Leu) + H(+). It catalyses the reaction N-terminal L-aspartyl-[protein] + L-leucyl-tRNA(Leu) = N-terminal L-leucyl-L-aspartyl-[protein] + tRNA(Leu) + H(+). Functionally, functions in the N-end rule pathway of protein degradation where it conjugates Leu from its aminoacyl-tRNA to the N-termini of proteins containing an N-terminal aspartate or glutamate. The protein is Aspartate/glutamate leucyltransferase of Maricaulis maris (strain MCS10) (Caulobacter maris).